A 357-amino-acid chain; its full sequence is tRNA-specific 2-thiouridylase MnmA (357 aa).

Residues 7 to 14 (GLSGGVDS) and Leu33 contribute to the ATP site. Residue Cys94 is the Nucleophile of the active site. An intrachain disulfide couples Cys94 to Cys193. Residue Gly119 coordinates ATP. An interaction with tRNA region spans residues 143–145 (KDQ). Cys193 (cysteine persulfide intermediate) is an active-site residue. The interaction with tRNA stretch occupies residues 298-299 (RY).

It belongs to the MnmA/TRMU family.

Its subcellular location is the cytoplasm. It carries out the reaction S-sulfanyl-L-cysteinyl-[protein] + uridine(34) in tRNA + AH2 + ATP = 2-thiouridine(34) in tRNA + L-cysteinyl-[protein] + A + AMP + diphosphate + H(+). Catalyzes the 2-thiolation of uridine at the wobble position (U34) of tRNA, leading to the formation of s(2)U34. The protein is tRNA-specific 2-thiouridylase MnmA of Synechococcus sp. (strain ATCC 27144 / PCC 6301 / SAUG 1402/1) (Anacystis nidulans).